A 186-amino-acid chain; its full sequence is Protein GrpE (186 aa).

Positions 1 to 22 (MSDSNKEKKKKFADMVSKRKGD) are enriched in basic and acidic residues. The disordered stretch occupies residues 1–35 (MSDSNKEKKKKFADMVSKRKGDDQEDQQTGDLSEE). Residues 23 to 34 (DQEDQQTGDLSE) are compositionally biased toward acidic residues.

The protein belongs to the GrpE family. In terms of assembly, homodimer.

Its subcellular location is the cytoplasm. Its function is as follows. Participates actively in the response to hyperosmotic and heat shock by preventing the aggregation of stress-denatured proteins, in association with DnaK and GrpE. It is the nucleotide exchange factor for DnaK and may function as a thermosensor. Unfolded proteins bind initially to DnaJ; upon interaction with the DnaJ-bound protein, DnaK hydrolyzes its bound ATP, resulting in the formation of a stable complex. GrpE releases ADP from DnaK; ATP binding to DnaK triggers the release of the substrate protein, thus completing the reaction cycle. Several rounds of ATP-dependent interactions between DnaJ, DnaK and GrpE are required for fully efficient folding. The sequence is that of Protein GrpE from Wolbachia pipientis subsp. Culex pipiens (strain wPip).